The sequence spans 351 residues: Large ribosomal subunit protein uL3 (351 aa).

2 disordered regions span residues 1–31 and 246–271; these read MGHRKLASPRRGSAGLRPRKRSSELLPTPRT and KGSRKIGTRGPSLGTPSYTPQPGQLG.

The protein belongs to the universal ribosomal protein uL3 family. In terms of assembly, part of the 50S ribosomal subunit. Forms a cluster with proteins L14 and L24e.

In terms of biological role, one of the primary rRNA binding proteins, it binds directly near the 3'-end of the 23S rRNA, where it nucleates assembly of the 50S subunit. This Saccharolobus islandicus (strain Y.N.15.51 / Yellowstone #2) (Sulfolobus islandicus) protein is Large ribosomal subunit protein uL3.